A 142-amino-acid chain; its full sequence is Required for drug-induced death protein 1 (142 aa).

Disordered regions lie at residues methionine 1–alanine 32 and glutamate 46–alanine 66. A helical membrane pass occupies residues valine 116–valine 138.

It is found in the membrane. In terms of biological role, regulates drug efflux through modulation of ABCB1 localization and activity. In Homo sapiens (Human), this protein is Required for drug-induced death protein 1.